The sequence spans 820 residues: Phenylalanine--tRNA ligase beta subunit (820 aa).

Residues 39-150 (PAPVGGVLLV…GTAAPGTPLR (112 aa)) enclose the tRNA-binding domain. The 76-residue stretch at 435-510 (EVPQTITTTG…RLHGFTELPE (76 aa)) folds into the B5 domain. Residues D488, D494, E497, and E498 each coordinate Mg(2+). The FDX-ACB domain occupies 727–818 (SRAPAAWRDL…AVKARGWAIR (92 aa)).

This sequence belongs to the phenylalanyl-tRNA synthetase beta subunit family. Type 1 subfamily. Tetramer of two alpha and two beta subunits. Mg(2+) serves as cofactor.

The protein resides in the cytoplasm. It carries out the reaction tRNA(Phe) + L-phenylalanine + ATP = L-phenylalanyl-tRNA(Phe) + AMP + diphosphate + H(+). The sequence is that of Phenylalanine--tRNA ligase beta subunit (pheT) from Deinococcus radiodurans (strain ATCC 13939 / DSM 20539 / JCM 16871 / CCUG 27074 / LMG 4051 / NBRC 15346 / NCIMB 9279 / VKM B-1422 / R1).